The chain runs to 390 residues: Cell division protein FtsZ (390 aa).

Residues glycine 20–asparagine 24, glycine 106–glycine 108, glutamate 137, arginine 141, and aspartate 184 each bind GTP.

This sequence belongs to the FtsZ family. As to quaternary structure, homodimer. Polymerizes to form a dynamic ring structure in a strictly GTP-dependent manner. Interacts directly with several other division proteins.

It localises to the cytoplasm. In terms of biological role, essential cell division protein that forms a contractile ring structure (Z ring) at the future cell division site. The regulation of the ring assembly controls the timing and the location of cell division. One of the functions of the FtsZ ring is to recruit other cell division proteins to the septum to produce a new cell wall between the dividing cells. Binds GTP and shows GTPase activity. This Mycoplasmopsis pulmonis (strain UAB CTIP) (Mycoplasma pulmonis) protein is Cell division protein FtsZ.